The primary structure comprises 285 residues: Protoheme IX farnesyltransferase (285 aa).

Transmembrane regions (helical) follow at residues 16–36, 40–60, 106–126, 136–156, 165–185, 217–237, and 265–285; these read AKPK…ILAF, WYNL…SMII, LLAN…YVFV, WLNI…GYAA, SLLL…ALAL, ILMI…YVII, and YKFS…SFIL.

Belongs to the UbiA prenyltransferase family. Protoheme IX farnesyltransferase subfamily.

The protein resides in the cell membrane. The catalysed reaction is heme b + (2E,6E)-farnesyl diphosphate + H2O = Fe(II)-heme o + diphosphate. Its pathway is porphyrin-containing compound metabolism; heme O biosynthesis; heme O from protoheme: step 1/1. In terms of biological role, converts heme B (protoheme IX) to heme O by substitution of the vinyl group on carbon 2 of heme B porphyrin ring with a hydroxyethyl farnesyl side group. The polypeptide is Protoheme IX farnesyltransferase (Sulfolobus acidocaldarius (strain ATCC 33909 / DSM 639 / JCM 8929 / NBRC 15157 / NCIMB 11770)).